A 62-amino-acid polypeptide reads, in one-letter code: Defensin BmKDfsin4 (62 aa).

The first 24 residues, 1–24, serve as a signal peptide directing secretion; sequence MKTIVLLFVLALVFCTLEMGIVEA. Intrachain disulfides connect C28-C49, C35-C57, and C39-C59.

It belongs to the invertebrate defensin family. Type 2 subfamily.

The protein localises to the secreted. In terms of biological role, dual-function peptide with antimicrobial and potassium channel-blocking activities. Shows inhibitory activity against Gram-positive bacteria such as S.aureus, B.subtilis, and M.luteus as well as methicillin-resistant S.aureus (MIC=0.1-20 uM). Does not act on bacteria by disrupting membranes. Also moderately inhibits Kv1.1/KCNA1 (25.2% inhibition at 1 uM), Kv1.2/KCNA2 (30.5% inhibition at 1 uM), and Kv1.3/KCNA3 potassium channels (IC(50)=510.2 nM, 61% inhibition at 1 uM). Inhibits potassium channels by interacting with the pore region. Does not show hemolytic activity. In vitro, dose-dependently decreases the production of Hepatitis B virus (HBV) DNA and HBV viral proteins in both culture medium and cell lysate. The polypeptide is Defensin BmKDfsin4 (Olivierus martensii (Manchurian scorpion)).